Consider the following 321-residue polypeptide: Lipoyl synthase (321 aa).

[4Fe-4S] cluster is bound by residues cysteine 68, cysteine 73, cysteine 79, cysteine 94, cysteine 98, cysteine 101, and serine 308. Residues 80–297 (FNHGTATFMI…KEIALELGFT (218 aa)) form the Radical SAM core domain.

The protein belongs to the radical SAM superfamily. Lipoyl synthase family. [4Fe-4S] cluster is required as a cofactor.

It localises to the cytoplasm. The enzyme catalyses [[Fe-S] cluster scaffold protein carrying a second [4Fe-4S](2+) cluster] + N(6)-octanoyl-L-lysyl-[protein] + 2 oxidized [2Fe-2S]-[ferredoxin] + 2 S-adenosyl-L-methionine + 4 H(+) = [[Fe-S] cluster scaffold protein] + N(6)-[(R)-dihydrolipoyl]-L-lysyl-[protein] + 4 Fe(3+) + 2 hydrogen sulfide + 2 5'-deoxyadenosine + 2 L-methionine + 2 reduced [2Fe-2S]-[ferredoxin]. It participates in protein modification; protein lipoylation via endogenous pathway; protein N(6)-(lipoyl)lysine from octanoyl-[acyl-carrier-protein]: step 2/2. Its function is as follows. Catalyzes the radical-mediated insertion of two sulfur atoms into the C-6 and C-8 positions of the octanoyl moiety bound to the lipoyl domains of lipoate-dependent enzymes, thereby converting the octanoylated domains into lipoylated derivatives. This is Lipoyl synthase from Vibrio atlanticus (strain LGP32) (Vibrio splendidus (strain Mel32)).